The chain runs to 272 residues: Rhamnulose-1-phosphate aldolase (272 aa).

The active site involves Glu-117. The Zn(2+) site is built by His-141, His-143, and His-212.

The protein belongs to the aldolase class II family. RhaD subfamily. Zn(2+) serves as cofactor.

The protein localises to the cytoplasm. It catalyses the reaction L-rhamnulose 1-phosphate = (S)-lactaldehyde + dihydroxyacetone phosphate. The protein operates within carbohydrate degradation; L-rhamnose degradation; glycerone phosphate from L-rhamnose: step 3/3. Catalyzes the reversible cleavage of L-rhamnulose-1-phosphate to dihydroxyacetone phosphate (DHAP) and L-lactaldehyde. This is Rhamnulose-1-phosphate aldolase from Mannheimia succiniciproducens (strain KCTC 0769BP / MBEL55E).